The following is a 57-amino-acid chain: Lantibiotic nisin-Z (57 aa).

Residues 1–23 (MSTKDFNLDLVSVSKKDSGASPR) constitute a propeptide that is removed on maturation. Thr-25 bears the 2,3-didehydrobutyrine mark. Positions 26–30 (SISLC) form a cross-link, lanthionine (Ser-Cys). The residue at position 28 (Ser-28) is a 2,3-didehydroalanine (Ser). 4 cross-links (beta-methyllanthionine (Thr-Cys)) span residues 31–34 (TPGC), 36–42 (TGALMGC), 46–49 (TATC), and 48–51 (TCNC). Ser-56 is modified (2,3-didehydroalanine (Ser)).

It belongs to the type A lantibiotic family. In terms of processing, maturation of lantibiotics involves the enzymatic conversion of Thr, and Ser into dehydrated AA and the formation of thioether bonds with cysteine. This is followed by membrane translocation and cleavage of the modified precursor. Post-translationally, the structure of the 2,3-didehydrobutyrine is not discussed in PubMed:15361862. It is probably the Z-isomer by similarity.

Functionally, lanthionine-containing peptide antibiotic (lantibiotic) active on Gram-positive bacteria. The bactericidal activity of lantibiotics is based on depolarization of energized bacterial cytoplasmic membranes, initiated by the formation of aqueous transmembrane pores. This chain is Lantibiotic nisin-Z (nisZ), found in Lactococcus lactis subsp. lactis (Streptococcus lactis).